The sequence spans 487 residues: Protein nucleotidyltransferase YdiU (487 aa).

Residues G85, G87, R88, K108, D120, G121, R171, and R178 each coordinate ATP. D247 acts as the Proton acceptor in catalysis. Residues N248 and D257 each contribute to the Mg(2+) site. D257 contacts ATP.

It belongs to the SELO family. Mg(2+) serves as cofactor. Requires Mn(2+) as cofactor.

The catalysed reaction is L-seryl-[protein] + ATP = 3-O-(5'-adenylyl)-L-seryl-[protein] + diphosphate. The enzyme catalyses L-threonyl-[protein] + ATP = 3-O-(5'-adenylyl)-L-threonyl-[protein] + diphosphate. It catalyses the reaction L-tyrosyl-[protein] + ATP = O-(5'-adenylyl)-L-tyrosyl-[protein] + diphosphate. It carries out the reaction L-histidyl-[protein] + UTP = N(tele)-(5'-uridylyl)-L-histidyl-[protein] + diphosphate. The catalysed reaction is L-seryl-[protein] + UTP = O-(5'-uridylyl)-L-seryl-[protein] + diphosphate. The enzyme catalyses L-tyrosyl-[protein] + UTP = O-(5'-uridylyl)-L-tyrosyl-[protein] + diphosphate. Functionally, nucleotidyltransferase involved in the post-translational modification of proteins. It can catalyze the addition of adenosine monophosphate (AMP) or uridine monophosphate (UMP) to a protein, resulting in modifications known as AMPylation and UMPylation. This is Protein nucleotidyltransferase YdiU from Agrobacterium fabrum (strain C58 / ATCC 33970) (Agrobacterium tumefaciens (strain C58)).